A 118-amino-acid polypeptide reads, in one-letter code: Small ribosomal subunit protein uS13 (118 aa).

The disordered stretch occupies residues 94 to 118; the sequence is SLPLRGQRTKTNARTRKGPRKPIKK.

The protein belongs to the universal ribosomal protein uS13 family. Part of the 30S ribosomal subunit. Forms a loose heterodimer with protein S19. Forms two bridges to the 50S subunit in the 70S ribosome.

Its function is as follows. Located at the top of the head of the 30S subunit, it contacts several helices of the 16S rRNA. In the 70S ribosome it contacts the 23S rRNA (bridge B1a) and protein L5 of the 50S subunit (bridge B1b), connecting the 2 subunits; these bridges are implicated in subunit movement. Contacts the tRNAs in the A and P-sites. This Shewanella oneidensis (strain ATCC 700550 / JCM 31522 / CIP 106686 / LMG 19005 / NCIMB 14063 / MR-1) protein is Small ribosomal subunit protein uS13.